We begin with the raw amino-acid sequence, 325 residues long: NADH-quinone oxidoreductase subunit H (325 aa).

8 consecutive transmembrane segments (helical) span residues 5–25 (LIII…AAAY), 75–95 (FVYW…FVLI), 117–137 (VGVV…VLAG), 157–177 (ISYE…TGTL), 190–210 (WLIW…FAET), 240–260 (FFLG…TLFF), 268–288 (DIPI…FMWV), and 305–325 (WKVL…FTLV).

This sequence belongs to the complex I subunit 1 family. In terms of assembly, NDH-1 is composed of 14 different subunits. Subunits NuoA, H, J, K, L, M, N constitute the membrane sector of the complex.

It is found in the cell inner membrane. The enzyme catalyses a quinone + NADH + 5 H(+)(in) = a quinol + NAD(+) + 4 H(+)(out). NDH-1 shuttles electrons from NADH, via FMN and iron-sulfur (Fe-S) centers, to quinones in the respiratory chain. The immediate electron acceptor for the enzyme in this species is believed to be ubiquinone. Couples the redox reaction to proton translocation (for every two electrons transferred, four hydrogen ions are translocated across the cytoplasmic membrane), and thus conserves the redox energy in a proton gradient. This subunit may bind ubiquinone. The sequence is that of NADH-quinone oxidoreductase subunit H from Protochlamydia amoebophila (strain UWE25).